The following is a 338-amino-acid chain: Anthranilate phosphoribosyltransferase (338 aa).

5-phospho-alpha-D-ribose 1-diphosphate contacts are provided by residues G80, 83–84 (GD), T88, 90–93 (NIST), 108–116 (KHGNRAMSS), and S120. An anthranilate-binding site is contributed by G80. Mg(2+) is bound at residue S92. Position 111 (N111) interacts with anthranilate. An anthranilate-binding site is contributed by R166. Mg(2+) is bound by residues D225 and E226.

It belongs to the anthranilate phosphoribosyltransferase family. In terms of assembly, homodimer. Requires Mg(2+) as cofactor.

It carries out the reaction N-(5-phospho-beta-D-ribosyl)anthranilate + diphosphate = 5-phospho-alpha-D-ribose 1-diphosphate + anthranilate. It functions in the pathway amino-acid biosynthesis; L-tryptophan biosynthesis; L-tryptophan from chorismate: step 2/5. Functionally, catalyzes the transfer of the phosphoribosyl group of 5-phosphorylribose-1-pyrophosphate (PRPP) to anthranilate to yield N-(5'-phosphoribosyl)-anthranilate (PRA). The protein is Anthranilate phosphoribosyltransferase of Herpetosiphon aurantiacus (strain ATCC 23779 / DSM 785 / 114-95).